The primary structure comprises 459 residues: Sensor histidine kinase SpaK (459 aa).

The Cytoplasmic segment spans residues 1-18 (MGIGFKGRKTLLRELVKY). Residues 19–39 (MVTLCISLVVLALLYIFINTI) traverse the membrane as a helical segment. The Extracellular segment spans residues 40–155 (AMNTGFSHPA…RKYLPNYELT (116 aa)). A helical transmembrane segment spans residues 156–176 (SICILIILLIIVISIITTYFA). Residues 177-459 (NRLRKHFETL…VRVKIPLRNE (283 aa)) lie on the Cytoplasmic side of the membrane. Residues 244-458 (ALAHEIKIPI…EVRVKIPLRN (215 aa)) form the Histidine kinase domain. Histidine 247 bears the Phosphohistidine; by autocatalysis mark.

The protein localises to the cell membrane. It catalyses the reaction ATP + protein L-histidine = ADP + protein N-phospho-L-histidine.. Functionally, member of the two-component regulatory system SpaK/SpaR involved in the regulation of the biosynthesis of lantibiotic subtilin. SpaK may function as a membrane-associated protein kinase that phosphorylates SpaR in response to environmental signals. The polypeptide is Sensor histidine kinase SpaK (spaK) (Bacillus subtilis).